The sequence spans 142 residues: Large ribosomal subunit protein bL17 (142 aa).

This sequence belongs to the bacterial ribosomal protein bL17 family. Part of the 50S ribosomal subunit. Contacts protein L32.

The polypeptide is Large ribosomal subunit protein bL17 (Chlamydia abortus (strain DSM 27085 / S26/3) (Chlamydophila abortus)).